The chain runs to 551 residues: MRWSVLDTVLLTVISFHLIQAPFTKVEESFNIQAIHDILTYSVFDISQYDHLKFPGVVPRTFVGAVIIAMLSRPYLYLSSLIQTSRPTSIDVQLVVRGIVGLTNGLSFIYLKNCLQDMFDEITEKKKEENEDKDIYIYDSAGTWFLLFLIGSFHLMFYSTRTLPNFVMTLPLTNVALGWVLLGRYNAAIFLSALVAIVFRLEVSALSAGIALFSVIFKKISLFDAIKFGIFGLGLGSAISITVDSYFWQEWCLPEVDGFLFNVVAGYASKWGVEPVTAYFTHYLRMMFMPPTVLLLNYFGYKLAPAKLKIVSLASLFHIIVLSFQPHKEWRFIIYAVPSIMLLGATGAAHLWENMKVKKITNVLCLAILPLSIMTSFFISMAFLYISRMNYPGGEALTSFNDMIVEKNITNATVHISIPPCMTGVTLFGELNYGVYGINYDKTENTTLLQEMWPSFDFLITHEPTASQLPFENKTTNHWELVNTTKMFTGFDPTYIKNFVFQERVNVLSLLKQIIFDKTPTVFLKELTANSIVKSDVFFTYKRIKQDEKTD.

The Lumenal segment spans residues 1-2 (MR). The chain crosses the membrane as a helical span at residues 3–23 (WSVLDTVLLTVISFHLIQAPF). Topologically, residues 24–61 (TKVEESFNIQAIHDILTYSVFDISQYDHLKFPGVVPRT) are cytoplasmic. Residues 62–82 (FVGAVIIAMLSRPYLYLSSLI) traverse the membrane as a helical segment. At 83-89 (QTSRPTS) the chain is on the lumenal side. Residues 90-110 (IDVQLVVRGIVGLTNGLSFIY) form a helical membrane-spanning segment. Over 111–136 (LKNCLQDMFDEITEKKKEENEDKDIY) the chain is Cytoplasmic. The chain crosses the membrane as a helical span at residues 137–157 (IYDSAGTWFLLFLIGSFHLMF). Over 158–178 (YSTRTLPNFVMTLPLTNVALG) the chain is Lumenal. A helical membrane pass occupies residues 179 to 199 (WVLLGRYNAAIFLSALVAIVF). Topologically, residues 200-202 (RLE) are cytoplasmic. Residues 203–223 (VSALSAGIALFSVIFKKISLF) form a helical membrane-spanning segment. Topologically, residues 224 to 227 (DAIK) are lumenal. The chain crosses the membrane as a helical span at residues 228 to 248 (FGIFGLGLGSAISITVDSYFW). Residues 249-275 (QEWCLPEVDGFLFNVVAGYASKWGVEP) are Cytoplasmic-facing. The helical transmembrane segment at 276-296 (VTAYFTHYLRMMFMPPTVLLL) threads the bilayer. The Lumenal segment spans residues 297 to 303 (NYFGYKL). The helical transmembrane segment at 304–324 (APAKLKIVSLASLFHIIVLSF) threads the bilayer. The Cytoplasmic portion of the chain corresponds to 325-331 (QPHKEWR). The helical transmembrane segment at 332–352 (FIIYAVPSIMLLGATGAAHLW) threads the bilayer. Residues 353 to 365 (ENMKVKKITNVLC) are Lumenal-facing. A helical membrane pass occupies residues 366–386 (LAILPLSIMTSFFISMAFLYI). Residues 387–417 (SRMNYPGGEALTSFNDMIVEKNITNATVHIS) lie on the Cytoplasmic side of the membrane. Residues 418–438 (IPPCMTGVTLFGELNYGVYGI) traverse the membrane as a helical segment. The Lumenal segment spans residues 439–551 (NYDKTENTTL…KRIKQDEKTD (113 aa)).

The protein belongs to the glycosyltransferase 22 family.

The protein localises to the endoplasmic reticulum membrane. It carries out the reaction an alpha-D-Man-(1-&gt;2)-alpha-D-Man-(1-&gt;2)-alpha-D-Man-(1-&gt;3)-[alpha-D-Man-(1-&gt;2)-alpha-D-Man-(1-&gt;3)-alpha-D-Man-(1-&gt;6)]-beta-D-Man-(1-&gt;4)-beta-D-GlcNAc-(1-&gt;4)-alpha-D-GlcNAc-diphospho-di-trans,poly-cis-dolichol + a di-trans,poly-cis-dolichyl beta-D-mannosyl phosphate = an alpha-D-Man-(1-&gt;2)-alpha-D-Man-(1-&gt;2)-alpha-D-Man-(1-&gt;3)-[alpha-D-Man-(1-&gt;2)-alpha-D-Man-(1-&gt;3)-[alpha-D-Man-(1-&gt;6)]-alpha-D-Man-(1-&gt;6)]-beta-D-Man-(1-&gt;4)-beta-D-GlcNAc-(1-&gt;4)-alpha-D-GlcNAc-diphospho-di-trans,poly-cis-dolichol + a di-trans,poly-cis-dolichyl phosphate + H(+). It participates in protein modification; protein glycosylation. Its function is as follows. Mannosyltransferase that operates in the biosynthetic pathway of dolichol-linked oligosaccharides, the glycan precursors employed in protein asparagine (N)-glycosylation. The assembly of dolichol-linked oligosaccharides begins on the cytosolic side of the endoplasmic reticulum membrane and finishes in its lumen. The sequential addition of sugars to dolichol pyrophosphate produces dolichol-linked oligosaccharides containing fourteen sugars, including two GlcNAcs, nine mannoses and three glucoses. Once assembled, the oligosaccharide is transferred from the lipid to nascent proteins by oligosaccharyltransferases. In the lumen of the endoplasmic reticulum, adds the eighth mannose residue in an alpha-1,6 linkage onto Man(7)GlcNAc(2)-PP-dolichol to produce Man(8)GlcNAc(2)-PP-dolichol. This chain is Dol-P-Man:Man(7)GlcNAc(2)-PP-Dol alpha-1,6-mannosyltransferase (ALG12), found in Saccharomyces cerevisiae (strain ATCC 204508 / S288c) (Baker's yeast).